The chain runs to 3102 residues: Laminin subunit alpha lam-3 (3102 aa).

The signal sequence occupies residues 1-16 (MRLWLGLLAVSNIALG). N-linked (GlcNAc...) asparagine glycans are attached at residues Asn19, Asn135, and Asn237. Residues 44-295 (SERGLFPNIF…SISDISIGGQ (252 aa)) form the Laminin N-terminal domain. 16 cysteine pairs are disulfide-bonded: Cys296-Cys305, Cys298-Cys316, Cys318-Cys327, Cys330-Cys350, Cys353-Cys362, Cys355-Cys387, Cys390-Cys399, Cys402-Cys420, Cys423-Cys435, Cys425-Cys451, Cys453-Cys462, Cys465-Cys475, Cys478-Cys491, Cys480-Cys496, Cys498-Cys507, and Cys510-Cys525. 4 Laminin EGF-like domains span residues 296–352 (CICY…VCQQ), 353–422 (CQCF…ACRT), 423–477 (CECD…TCEP), and 478–527 (CPCN…GCQP). The Laminin IV type A 1 domain occupies 548 to 740 (INNIGWHLTD…QDTLMGGVEV (193 aa)). 31 cysteine pairs are disulfide-bonded: Cys774-Cys783, Cys776-Cys790, Cys793-Cys802, Cys805-Cys822, Cys825-Cys838, Cys827-Cys858, Cys861-Cys870, Cys873-Cys886, Cys889-Cys903, Cys891-Cys910, Cys913-Cys922, Cys925-Cys938, Cys941-Cys953, Cys943-Cys960, Cys962-Cys971, Cys974-Cys985, Cys988-Cys1000, Cys990-Cys1007, Cys1009-Cys1018, Cys1021-Cys1033, Cys1036-Cys1049, Cys1038-Cys1056, Cys1058-Cys1067, Cys1070-Cys1083, Cys1086-Cys1098, Cys1088-Cys1105, Cys1107-Cys1116, Cys1119-Cys1131, Cys1134-Cys1144, Cys1137-Cys1151, and Cys1153-Cys1162. 10 Laminin EGF-like domains span residues 774–824 (CDCH…ACEQ), 825–888 (CECP…KCIE), 889–940 (CTCN…TCKP), 941–987 (CGCH…GCPA), 988–1035 (CDCN…GCQF), 1036–1085 (CHCN…GCED), 1086–1133 (CGCD…GCTE), 1134–1180 (CEPC…GCKL), 1181–1226 (CDCS…TCEP), and 1227–1283 (CGCN…GCTE). An N-linked (GlcNAc...) asparagine glycan is attached at Asn796. An N-linked (GlcNAc...) asparagine glycan is attached at Asn991. Asn1027 is a glycosylation site (N-linked (GlcNAc...) asparagine). Residue Asn1076 is glycosylated (N-linked (GlcNAc...) asparagine). Asn1164 carries an N-linked (GlcNAc...) asparagine glycan. 9 cysteine pairs are disulfide-bonded: Cys1165–Cys1178, Cys1181–Cys1193, Cys1183–Cys1200, Cys1202–Cys1211, Cys1214–Cys1224, Cys1227–Cys1246, Cys1229–Cys1252, Cys1254–Cys1263, and Cys1266–Cys1281. The N-linked (GlcNAc...) asparagine glycan is linked to Asn1288. One can recognise a Laminin IV type A 2 domain in the interval 1295–1496 (QSDLVWQQMY…STTKAIGVEK (202 aa)). 12 disulfides stabilise this stretch: Cys1540-Cys1549, Cys1542-Cys1556, Cys1559-Cys1568, Cys1571-Cys1587, Cys1590-Cys1603, Cys1592-Cys1614, Cys1617-Cys1626, Cys1629-Cys1644, Cys1647-Cys1659, Cys1649-Cys1666, Cys1668-Cys1677, and Cys1680-Cys1691. Laminin EGF-like domains lie at 1540–1589 (CSCH…ACTK), 1590–1646 (CACP…TCSP), and 1647–1693 (CDCH…VCTS). Residues Asn1717, Asn1734, Asn1777, Asn1806, Asn1839, Asn1875, Asn1969, Asn1984, and Asn2048 are each glycosylated (N-linked (GlcNAc...) asparagine). The tract at residues 2061 to 2084 (EAVSKMLGSEGSESGDANEESLRS) is disordered. Residues Asn2091, Asn2193, Asn2369, and Asn2479 are each glycosylated (N-linked (GlcNAc...) asparagine). Laminin G-like domains lie at 2467 to 2644 (SQRG…TDGC), 2652 to 2839 (DKII…IGMC), and 2913 to 3088 (RYGL…AKAC). A disulfide bridge connects residues Cys2617 and Cys2644. Residues Asn2672 and Asn2686 are each glycosylated (N-linked (GlcNAc...) asparagine). Cys2814 and Cys2839 are disulfide-bonded. Residues Asn2932, Asn2959, and Asn3007 are each glycosylated (N-linked (GlcNAc...) asparagine). A disulfide bridge connects residues Cys3058 and Cys3088.

As to quaternary structure, laminin is a complex glycoprotein, consisting of three different polypeptide chains (alpha, beta, gamma), which are bound to each other by disulfide bonds into a cross-shaped molecule comprising one long and three short arms with globules at each end.

The protein resides in the secreted. It is found in the extracellular space. Its subcellular location is the extracellular matrix. It localises to the basement membrane. Functionally, binding to cells via a high affinity receptor, laminin is thought to mediate the attachment, migration and organization of cells into tissues during embryonic development by interacting with other extracellular matrix components. Required to assemble a stable basement membrane and for organizing receptor complexes and cytoskeletal components to the proper cell surfaces. During embryogenesis, does not require the presence of collagen type IV in order to associate with cell surfaces, prior to assembly of the prototypical basement membrane. Plays an important role in muscle contraction of the body. Probably plays a distinct role from the related laminin subunit alpha epi-1. This chain is Laminin subunit alpha lam-3, found in Caenorhabditis elegans.